A 174-amino-acid polypeptide reads, in one-letter code: Large ribosomal subunit protein uL10 (174 aa).

This sequence belongs to the universal ribosomal protein uL10 family. In terms of assembly, part of the ribosomal stalk of the 50S ribosomal subunit. The N-terminus interacts with L11 and the large rRNA to form the base of the stalk. The C-terminus forms an elongated spine to which L12 dimers bind in a sequential fashion forming a multimeric L10(L12)X complex.

Functionally, forms part of the ribosomal stalk, playing a central role in the interaction of the ribosome with GTP-bound translation factors. The polypeptide is Large ribosomal subunit protein uL10 (Anaeromyxobacter dehalogenans (strain 2CP-1 / ATCC BAA-258)).